The primary structure comprises 156 residues: Small ribosomal subunit protein uS7c (156 aa).

This sequence belongs to the universal ribosomal protein uS7 family. As to quaternary structure, part of the 30S ribosomal subunit.

It is found in the plastid. The protein localises to the cyanelle. In terms of biological role, one of the primary rRNA binding proteins, it binds directly to 16S rRNA where it nucleates assembly of the head domain of the 30S subunit. The protein is Small ribosomal subunit protein uS7c (rps7) of Cyanophora paradoxa.